A 196-amino-acid polypeptide reads, in one-letter code: MELNPGNPIFDYCVLPCFIFLARVTDVSIGTIRVILLTREKKVIAASLGFLEVLLWVIVITQVIKNLNNALCYLAYAGGFAAGTFIGMILEEKLAIGFSLLRIISPRNGDEIANKLSEAGYGVTTMNGQGSRGPVKIVFTVLKRKKIGQAMTIVKSVEPDVFYSIENARSTNTAVSEDSPGLLRIGILEKILKVRK.

3 helical membrane-spanning segments follow: residues 12 to 32 (YCVL…IGTI), 44 to 64 (IAAS…TQVI), and 70 to 90 (ALCY…GMIL).

This sequence belongs to the UPF0316 family.

It is found in the cell membrane. This chain is UPF0316 protein LBL_2483, found in Leptospira borgpetersenii serovar Hardjo-bovis (strain L550).